Reading from the N-terminus, the 159-residue chain is 2-C-methyl-D-erythritol 2,4-cyclodiphosphate synthase (159 aa).

Residues Asp-11 and His-13 each coordinate a divalent metal cation. 4-CDP-2-C-methyl-D-erythritol 2-phosphate is bound by residues 11–13 (DVH) and 37–38 (HS). Position 45 (His-45) interacts with a divalent metal cation. 4-CDP-2-C-methyl-D-erythritol 2-phosphate contacts are provided by residues 59–61 (DIG) and 64–68 (FPDSD).

Belongs to the IspF family. Homotrimer. A divalent metal cation is required as a cofactor.

It catalyses the reaction 4-CDP-2-C-methyl-D-erythritol 2-phosphate = 2-C-methyl-D-erythritol 2,4-cyclic diphosphate + CMP. It functions in the pathway isoprenoid biosynthesis; isopentenyl diphosphate biosynthesis via DXP pathway; isopentenyl diphosphate from 1-deoxy-D-xylulose 5-phosphate: step 4/6. In terms of biological role, involved in the biosynthesis of isopentenyl diphosphate (IPP) and dimethylallyl diphosphate (DMAPP), two major building blocks of isoprenoid compounds. Catalyzes the conversion of 4-diphosphocytidyl-2-C-methyl-D-erythritol 2-phosphate (CDP-ME2P) to 2-C-methyl-D-erythritol 2,4-cyclodiphosphate (ME-CPP) with a corresponding release of cytidine 5-monophosphate (CMP). The sequence is that of 2-C-methyl-D-erythritol 2,4-cyclodiphosphate synthase from Solibacter usitatus (strain Ellin6076).